The sequence spans 196 residues: Putative HTH-type transcriptional regulator protein PtxE (196 aa).

One can recognise an HTH lysR-type domain in the interval 1-59; it reads MLNPVWLKSLVAIVQTGSFQSAARALGLAQPTVSQHLQKLEEQVGVTLVQRSRSGCQPT. The segment at residues 19–38 is a DNA-binding region (H-T-H motif); it reads FQSAARALGLAQPTVSQHLQ.

Belongs to the LysR transcriptional regulatory family.

In Stutzerimonas stutzeri (Pseudomonas stutzeri), this protein is Putative HTH-type transcriptional regulator protein PtxE (ptxE).